Here is a 538-residue protein sequence, read N- to C-terminus: MEIKEISVPLQGVVGDYIKSDNKIQTCFDYALTEAGFKQRLYDLRNRKFFRQELVEHLLEYNKQLQAGQSTIQNIEALADENTYVVIGGQQAGLLTGPLYTVHKVISIVQLAKEKEASLGTRVVPVFWIAGEDHDVDEINHTFVTKNKKIKKMIFHDRHSKKTSASESEISIEDCSKWIEEIFKTYPETNFTKDVLQFIQEALEESSTYVDFFARLITKLFADTGLILVDSHHPNLRKLEVSFFKRIISQYKEVQEALHNQQQIVKEYGYKPIIETKQNAIHVFMQIDEERVLLEEENGKFVGKSGIYSFSYEELIEEMEQSPERFSNNVVTRPLMQEYLFPTVAFIGGPGEIAYWSELQQVFHVFDFQMPPVVPRLTISYMERDIITDLYDLNLQEEDPFVKDLDKLREKWLSNQVEEPVEEKFQEAKKNMMDIHSSLQQFVNRIDPGLKEFAGKNERKIQEQIELLERMLKQNLERRHEVELNKFRRLQYALRPLGAPQERVWNVCYYLNQYGLDFVERVTKQSYSWNGTHHVIKL.

Residues 421 to 485 (VEEKFQEAKK…LERRHEVELN (65 aa)) are a coiled coil.

The protein belongs to the BshC family.

Involved in bacillithiol (BSH) biosynthesis. May catalyze the last step of the pathway, the addition of cysteine to glucosamine malate (GlcN-Mal) to generate BSH. The sequence is that of Putative cysteine ligase BshC from Bacillus cytotoxicus (strain DSM 22905 / CIP 110041 / 391-98 / NVH 391-98).